The sequence spans 199 residues: Large ribosomal subunit protein bL25 (199 aa).

This sequence belongs to the bacterial ribosomal protein bL25 family. CTC subfamily. As to quaternary structure, part of the 50S ribosomal subunit; part of the 5S rRNA/L5/L18/L25 subcomplex. Contacts the 5S rRNA. Binds to the 5S rRNA independently of L5 and L18.

This is one of the proteins that binds to the 5S RNA in the ribosome where it forms part of the central protuberance. This Chlorobaculum tepidum (strain ATCC 49652 / DSM 12025 / NBRC 103806 / TLS) (Chlorobium tepidum) protein is Large ribosomal subunit protein bL25.